Here is a 130-residue protein sequence, read N- to C-terminus: S-protein homolog 30 (130 aa).

2 N-linked (GlcNAc...) asparagine glycosylation sites follow: N64 and N77.

It belongs to the plant self-incompatibility (S1) protein family.

Its subcellular location is the secreted. This Arabidopsis thaliana (Mouse-ear cress) protein is S-protein homolog 30.